Here is a 339-residue protein sequence, read N- to C-terminus: Cullin-associated NEDD8-dissociated protein 1, N-terminal part (339 aa).

HEAT repeat units follow at residues 5–42 and 50–87; these read HTIQQNLNGLLSKLNDPDPDMRYMSLNDLYGILSNPCS and ASATRLAEGLLKALDDQHGDVQNQALKCLGPLVARLPL.

As to quaternary structure, interacts with candA-C. Interacts with unneddylated cullins culA and culD; interaction occurs only when complexed with candA-C.

The protein localises to the nucleus. In terms of biological role, assembly factor of SCF (SKP1-CUL1-F-box protein) E3 ubiquitin ligase complexes that promotes the exchange of the substrate-recognition F-box subunit in SCF complexes, thereby playing a key role in the cellular repertoire of SCF complexes. Acts as a F-box protein exchange factor when interacting with candA-C. In Emericella nidulans (strain FGSC A4 / ATCC 38163 / CBS 112.46 / NRRL 194 / M139) (Aspergillus nidulans), this protein is Cullin-associated NEDD8-dissociated protein 1, N-terminal part (candA-N).